We begin with the raw amino-acid sequence, 749 residues long: 5-methyltetrahydropteroyltriglutamate--homocysteine methyltransferase (749 aa).

5-methyltetrahydropteroyltri-L-glutamate is bound by residues 15-18 (RELK) and Lys-114. L-homocysteine is bound by residues 425–427 (IGS) and Glu-478. Residues 425 to 427 (IGS) and Glu-478 each bind L-methionine. Trp-555 lines the 5-methyltetrahydropteroyltri-L-glutamate pocket. Residue Asp-593 participates in L-homocysteine binding. Residue Asp-593 coordinates L-methionine. A 5-methyltetrahydropteroyltri-L-glutamate-binding site is contributed by Glu-599. Zn(2+)-binding residues include His-636, Cys-638, and Glu-660. Catalysis depends on His-689, which acts as the Proton donor. Cys-721 serves as a coordination point for Zn(2+).

The protein belongs to the vitamin-B12 independent methionine synthase family. Zn(2+) serves as cofactor.

The enzyme catalyses 5-methyltetrahydropteroyltri-L-glutamate + L-homocysteine = tetrahydropteroyltri-L-glutamate + L-methionine. It participates in amino-acid biosynthesis; L-methionine biosynthesis via de novo pathway; L-methionine from L-homocysteine (MetE route): step 1/1. Functionally, catalyzes the transfer of a methyl group from 5-methyltetrahydrofolate to homocysteine resulting in methionine formation. In Streptococcus suis (strain 05ZYH33), this protein is 5-methyltetrahydropteroyltriglutamate--homocysteine methyltransferase.